Reading from the N-terminus, the 487-residue chain is Beta-barrel assembly-enhancing protease (487 aa).

Residues 1–27 form the signal peptide; it reads MFRQLKKNLVATLIAALALGQVAPAFA. His136 contacts Zn(2+). The active site involves Glu137. Zn(2+) is bound by residues His140 and Glu201. Asp205 serves as the catalytic Proton donor. 2 TPR repeats span residues 309–342 and 427–460; these read HAAQ…EPNN and DQEL…AKLG.

Belongs to the peptidase M48 family. BepA subfamily. Zn(2+) serves as cofactor.

The protein localises to the periplasm. Functionally, functions both as a chaperone and a metalloprotease. Maintains the integrity of the outer membrane by promoting either the assembly or the elimination of outer membrane proteins, depending on their folding state. This Salmonella typhi protein is Beta-barrel assembly-enhancing protease.